A 91-amino-acid polypeptide reads, in one-letter code: Small ribosomal subunit protein bS20 (91 aa).

Basic and acidic residues predominate over residues 1-21 (MPLHKSAEKRLRQAARRNERN). The interval 1-24 (MPLHKSAEKRLRQAARRNERNRAR) is disordered.

This sequence belongs to the bacterial ribosomal protein bS20 family.

Binds directly to 16S ribosomal RNA. This Chlorobaculum parvum (strain DSM 263 / NCIMB 8327) (Chlorobium vibrioforme subsp. thiosulfatophilum) protein is Small ribosomal subunit protein bS20.